Consider the following 262-residue polypeptide: Phosphate import ATP-binding protein PstB (262 aa).

The ABC transporter domain occupies alanine 15–isoleucine 257. Residue glycine 47–serine 54 participates in ATP binding.

It belongs to the ABC transporter superfamily. Phosphate importer (TC 3.A.1.7) family. The complex is composed of two ATP-binding proteins (PstB), two transmembrane proteins (PstC and PstA) and a solute-binding protein (PstS).

The protein localises to the cell inner membrane. It carries out the reaction phosphate(out) + ATP + H2O = ADP + 2 phosphate(in) + H(+). Its function is as follows. Part of the ABC transporter complex PstSACB involved in phosphate import. Responsible for energy coupling to the transport system. The chain is Phosphate import ATP-binding protein PstB from Wolinella succinogenes (strain ATCC 29543 / DSM 1740 / CCUG 13145 / JCM 31913 / LMG 7466 / NCTC 11488 / FDC 602W) (Vibrio succinogenes).